The following is a 200-amino-acid chain: Probable molybdenum cofactor guanylyltransferase (200 aa).

GTP-binding positions include 9–11, K21, D69, and D100; that span reads LAG. D100 contacts Mg(2+).

This sequence belongs to the MobA family. Mg(2+) serves as cofactor.

It localises to the cytoplasm. The enzyme catalyses Mo-molybdopterin + GTP + H(+) = Mo-molybdopterin guanine dinucleotide + diphosphate. In terms of biological role, transfers a GMP moiety from GTP to Mo-molybdopterin (Mo-MPT) cofactor (Moco or molybdenum cofactor) to form Mo-molybdopterin guanine dinucleotide (Mo-MGD) cofactor. The protein is Probable molybdenum cofactor guanylyltransferase of Bacillus thuringiensis (strain Al Hakam).